The chain runs to 162 residues: Ribosome-binding factor A (162 aa).

Residues 124–162 form a disordered region; the sequence is ARVRSGAKPAGEADPYRESGSGVEPGRDGSIGDDDQPEY.

It belongs to the RbfA family. As to quaternary structure, monomer. Binds 30S ribosomal subunits, but not 50S ribosomal subunits or 70S ribosomes.

The protein resides in the cytoplasm. In terms of biological role, one of several proteins that assist in the late maturation steps of the functional core of the 30S ribosomal subunit. Associates with free 30S ribosomal subunits (but not with 30S subunits that are part of 70S ribosomes or polysomes). Required for efficient processing of 16S rRNA. May interact with the 5'-terminal helix region of 16S rRNA. The sequence is that of Ribosome-binding factor A from Mycolicibacterium paratuberculosis (strain ATCC BAA-968 / K-10) (Mycobacterium paratuberculosis).